Reading from the N-terminus, the 218-residue chain is Twisted gastrulation protein homolog 1-B (218 aa).

The first 25 residues, Met-1–Cys-25, serve as a signal peptide directing secretion. N-linked (GlcNAc...) asparagine glycans are attached at residues Asn-52, Asn-81, and Asn-147.

Belongs to the twisted gastrulation protein family. Binds directly to bmp2, bmp4 and bmp7 and can form a ternary complex with bmps and chordin, thus preventing the binding of bmps to their cell surface receptors.

The protein localises to the secreted. In terms of biological role, involved in dorsal-ventral patterning, permitting peak BMP signaling by antagonizing the residual anti-BMP activity of the cleavage products of chrd. Functions to promote the formation of ventral mesoderm by increasing the activity of bmp7 and other BMPS. Seems to antagonize BMP signaling by forming ternary complexes with chrd and BMPs, thereby preventing BMPs from binding to their receptors. In addition to the anti-BMP function, also has pro-BMP activity, partly mediated by cleavage and degradation of chrd, which releases BMPs from ternary complexes. May be an important modulator of BMP-regulated cartilage development and chondrocyte differentiation. The polypeptide is Twisted gastrulation protein homolog 1-B (twsg1-b) (Xenopus laevis (African clawed frog)).